Reading from the N-terminus, the 269-residue chain is Phosphatidylglycerol--prolipoprotein diacylglyceryl transferase (269 aa).

7 helical membrane passes run L17 to A37, L56 to Y76, W92 to F112, F120 to I140, P174 to Y194, M202 to V222, and L237 to L257. An a 1,2-diacyl-sn-glycero-3-phospho-(1'-sn-glycerol)-binding site is contributed by R139.

This sequence belongs to the Lgt family.

It localises to the cell inner membrane. The enzyme catalyses L-cysteinyl-[prolipoprotein] + a 1,2-diacyl-sn-glycero-3-phospho-(1'-sn-glycerol) = an S-1,2-diacyl-sn-glyceryl-L-cysteinyl-[prolipoprotein] + sn-glycerol 1-phosphate + H(+). Its pathway is protein modification; lipoprotein biosynthesis (diacylglyceryl transfer). Its function is as follows. Catalyzes the transfer of the diacylglyceryl group from phosphatidylglycerol to the sulfhydryl group of the N-terminal cysteine of a prolipoprotein, the first step in the formation of mature lipoproteins. This is Phosphatidylglycerol--prolipoprotein diacylglyceryl transferase from Pseudomonas putida (strain W619).